Consider the following 368-residue polypeptide: MNDETAPTNKSQEKAELRRGWTTGACATAATKAALTALITGEFPDPVGIILPKGEVPYFQLAYEGLGDGYAMAGIVKDAGDDPDVTHGATIISTVFPAPPGTGVVFRAGEGVGTVTRPGLQIPPGEAAINPVPRRMMTEICEQICAEYGLPADIVITISVPGGEEIAKKTWNPRLGIVGGISILGTTGVVHPFSCSAWIHSIHRGIDVARAAGQKHVLGATGSTSEDAAQALYDLPDFAILDMGDFAGGVLKYLREHPIDKLTIAGGFAKLTKLAQGALDLHSSRSQVDKSFLWTLAEKAGAPESMKDQILFANTALEVLELTQSIGLDMATPIALKAKETALETLRGAPVAVEIIVTDRSGNILARV.

Belongs to the CbiD family.

It carries out the reaction Co-precorrin-5B + S-adenosyl-L-methionine = Co-precorrin-6A + S-adenosyl-L-homocysteine. Its pathway is cofactor biosynthesis; adenosylcobalamin biosynthesis; cob(II)yrinate a,c-diamide from sirohydrochlorin (anaerobic route): step 6/10. Its function is as follows. Catalyzes the methylation of C-1 in cobalt-precorrin-5B to form cobalt-precorrin-6A. In Brucella anthropi (strain ATCC 49188 / DSM 6882 / CCUG 24695 / JCM 21032 / LMG 3331 / NBRC 15819 / NCTC 12168 / Alc 37) (Ochrobactrum anthropi), this protein is Cobalt-precorrin-5B C(1)-methyltransferase.